We begin with the raw amino-acid sequence, 389 residues long: Na(+)/H(+) antiporter NhaA (389 aa).

11 helical membrane-spanning segments follow: residues 14 to 34 (AGGI…NSPL), 59 to 79 (LILW…GLEV), 95 to 115 (SLPT…YLLF), 124 to 144 (AGWA…MALL), 154 to 174 (VFLL…IALF), 177 to 197 (TDLS…LVGL), 213 to 233 (LILW…GVII), 257 to 277 (PWST…VYVG), 292 to 312 (IALG…YIAV), 328 to 348 (IAPV…IASL), and 363 to 383 (LGTL…LSKV).

This sequence belongs to the NhaA Na(+)/H(+) (TC 2.A.33) antiporter family.

It is found in the cell inner membrane. The enzyme catalyses Na(+)(in) + 2 H(+)(out) = Na(+)(out) + 2 H(+)(in). In terms of biological role, na(+)/H(+) antiporter that extrudes sodium in exchange for external protons. This Shewanella baltica (strain OS155 / ATCC BAA-1091) protein is Na(+)/H(+) antiporter NhaA.